An 880-amino-acid polypeptide reads, in one-letter code: Valine--tRNA ligase (880 aa).

The short motif at 46 to 56 is the 'HIGH' region element; it reads PNVTGKLHLGH. The short motif at 520–524 is the 'KMSKS' region element; sequence KMSKS. Lys523 lines the ATP pocket. The stretch at 808 to 880 forms a coiled coil; sequence LAGLINIEEE…KARIAELKEN (73 aa).

It belongs to the class-I aminoacyl-tRNA synthetase family. ValS type 1 subfamily. As to quaternary structure, monomer.

Its subcellular location is the cytoplasm. It catalyses the reaction tRNA(Val) + L-valine + ATP = L-valyl-tRNA(Val) + AMP + diphosphate. Catalyzes the attachment of valine to tRNA(Val). As ValRS can inadvertently accommodate and process structurally similar amino acids such as threonine, to avoid such errors, it has a 'posttransfer' editing activity that hydrolyzes mischarged Thr-tRNA(Val) in a tRNA-dependent manner. The protein is Valine--tRNA ligase of Lactococcus lactis subsp. lactis (strain IL1403) (Streptococcus lactis).